The chain runs to 256 residues: Ribonuclease HII (256 aa).

The RNase H type-2 domain occupies 67–255 (QLVGGVDEVG…VSEMVGLKKA (189 aa)). A divalent metal cation contacts are provided by Asp73, Glu74, and Asp165.

The protein belongs to the RNase HII family. Mn(2+) serves as cofactor. Mg(2+) is required as a cofactor.

The protein resides in the cytoplasm. It carries out the reaction Endonucleolytic cleavage to 5'-phosphomonoester.. Functionally, endonuclease that specifically degrades the RNA of RNA-DNA hybrids. This is Ribonuclease HII from Lactobacillus delbrueckii subsp. bulgaricus (strain ATCC 11842 / DSM 20081 / BCRC 10696 / JCM 1002 / NBRC 13953 / NCIMB 11778 / NCTC 12712 / WDCM 00102 / Lb 14).